A 753-amino-acid chain; its full sequence is Subtilisin-like protease SBT3.17 (753 aa).

The N-terminal stretch at Met1 to Ala29 is a signal peptide. A propeptide spans Lys30–Lys116 (activation peptide). One can recognise an Inhibitor I9 domain in the interval His38–Leu115. Asn97 is a glycosylation site (N-linked (GlcNAc...) asparagine). One can recognise a Peptidase S8 domain in the interval Thr120–Thr603. The active-site Charge relay system is Asp150. The N-linked (GlcNAc...) asparagine glycan is linked to Asn161. The active-site Charge relay system is His227. The N-linked (GlcNAc...) asparagine glycan is linked to Asn369. Residue Ser534 is the Charge relay system of the active site. 3 N-linked (GlcNAc...) asparagine glycosylation sites follow: Asn639, Asn704, and Asn737.

The protein belongs to the peptidase S8 family.

It localises to the secreted. The protein is Subtilisin-like protease SBT3.17 of Arabidopsis thaliana (Mouse-ear cress).